A 389-amino-acid chain; its full sequence is Na(+)/H(+) antiporter NhaA (389 aa).

Helical transmembrane passes span 24–44 (ILLI…AGPA), 56–76 (LSIE…FVGL), 94–114 (LLPI…HYTL), 122–142 (AGTG…LALL), 152–172 (VFLT…IAMF), 176–196 (QFSL…LVLN), 216–236 (FLML…AFAI), 259–279 (PVAF…VIGS), 291–311 (LGII…LSFV), 326–346 (WTHI…SIFI), and 363–383 (MAIL…LSFF).

This sequence belongs to the NhaA Na(+)/H(+) (TC 2.A.33) antiporter family.

Its subcellular location is the cell inner membrane. It carries out the reaction Na(+)(in) + 2 H(+)(out) = Na(+)(out) + 2 H(+)(in). Functionally, na(+)/H(+) antiporter that extrudes sodium in exchange for external protons. This chain is Na(+)/H(+) antiporter NhaA, found in Dechloromonas aromatica (strain RCB).